A 153-amino-acid polypeptide reads, in one-letter code: MATKIRLKRQGKKFYAFYRVVVVDSRKKRDGKVIEEIGTYNPNTQPSTIQIKSDRAQYWLGVGAQPSEPVFKLLNITGDWQKYKGLEGAEGTLKTVEAGPDAEARIAAVENQAQKLKAAKAEAAAKAKAEAEAAAAAEEAPAEEAAEEAPAED.

Residues 121–131 (AEAAAKAKAEA) show a composition bias toward basic and acidic residues. Positions 121–153 (AEAAAKAKAEAEAAAAAEEAPAEEAAEEAPAED) are disordered. A compositionally biased stretch (acidic residues) spans 140–153 (APAEEAAEEAPAED).

Belongs to the bacterial ribosomal protein bS16 family.

In Bifidobacterium longum (strain DJO10A), this protein is Small ribosomal subunit protein bS16.